A 104-amino-acid polypeptide reads, in one-letter code: L-rhamnose mutarotase (104 aa).

Y18 contributes to the substrate binding site. H22 acts as the Proton donor in catalysis. Substrate contacts are provided by residues Y41 and 76-77; that span reads WW.

It belongs to the rhamnose mutarotase family. As to quaternary structure, homodimer.

The protein localises to the cytoplasm. It carries out the reaction alpha-L-rhamnose = beta-L-rhamnose. It participates in carbohydrate metabolism; L-rhamnose metabolism. Functionally, involved in the anomeric conversion of L-rhamnose. The sequence is that of L-rhamnose mutarotase from Burkholderia cenocepacia (strain HI2424).